The chain runs to 212 residues: Redox-sensing transcriptional repressor Rex (212 aa).

Residues 16–55 (IYYRYLNILLDADKTRVSSTELSEAVKVDSATIRRDFSYF) constitute a DNA-binding region (H-T-H motif). Residue 90–95 (GVGNLG) participates in NAD(+) binding.

This sequence belongs to the transcriptional regulatory Rex family. Homodimer.

It localises to the cytoplasm. Its function is as follows. Modulates transcription in response to changes in cellular NADH/NAD(+) redox state. In Levilactobacillus brevis (strain ATCC 367 / BCRC 12310 / CIP 105137 / JCM 1170 / LMG 11437 / NCIMB 947 / NCTC 947) (Lactobacillus brevis), this protein is Redox-sensing transcriptional repressor Rex.